The following is a 537-amino-acid chain: Efflux pump ustT (537 aa).

Over residues 1-25 (MAKEAQSLHELDNMKEKEVDQEKKA) the composition is skewed to basic and acidic residues. Residues 1-50 (MAKEAQSLHELDNMKEKEVDQEKKAPTSVGDQEEHDDPKKQASHSQNVSE) form a disordered region. N47 carries an N-linked (GlcNAc...) asparagine glycan. The next 8 helical transmembrane spans lie at 71 to 91 (PLAMAVIMVAISMGMFLVSLL), 104 to 124 (WVYMSLVFIFVIGSAVGAGAM), 137 to 157 (GIGLGGVLSGSTILIAENAPL), 162 to 182 (MFLGILMATMSISAIVGPLIG), 193 to 213 (WCFILNIPIGGAIIAVLFFFV), 236 to 256 (LGSALLLPAVVCLILALQWAG), 266 to 286 (IILLFVFGGLLSIGFVVSQML), and 304 to 324 (FGSFLFSAMTGGAMLVVTYWI). N333 carries an N-linked (GlcNAc...) asparagine glycan. 4 helical membrane passes run 339-359 (AGIRTIALVLSQAVGAIMGGG), 363-383 (LIGYPPPIMMISATFIAVGAG), 397-417 (WIGYQILMGLGLGFGTQQASL), and 430-450 (TAISLIFFGMQLGGSIFVCIG). A glycan (N-linked (GlcNAc...) asparagine) is linked at N501. Residues 507-527 (TFYVALAAGITSMLSAFLVQW) form a helical membrane-spanning segment.

It belongs to the major facilitator superfamily. TCR/Tet family.

The protein localises to the cell membrane. Functionally, efflux pump; part of the gene cluster that mediates the biosynthesis of ustilaginoidins, dimeric gamma-naphthopyrones isolated from different fungal species. This Ustilaginoidea virens (Rice false smut fungus) protein is Efflux pump ustT.